A 244-amino-acid chain; its full sequence is Cell division protein ZapD (244 aa).

The protein belongs to the ZapD family. In terms of assembly, interacts with FtsZ.

It localises to the cytoplasm. Functionally, cell division factor that enhances FtsZ-ring assembly. Directly interacts with FtsZ and promotes bundling of FtsZ protofilaments, with a reduction in FtsZ GTPase activity. The chain is Cell division protein ZapD from Shewanella baltica (strain OS185).